The following is a 74-amino-acid chain: Protein krueppel (74 aa).

C2H2-type zinc fingers lie at residues 1–4 (ERTH), 10–32 (FECQ…MRLH), 38–60 (YRCE…LRVH), and 66–74 (YGCEHCSMK).

The protein belongs to the krueppel C2H2-type zinc-finger protein family.

Its subcellular location is the nucleus. Functionally, krueppel is a gap class segmentation protein. This is Protein krueppel (Kr) from Tribolium castaneum (Red flour beetle).